A 397-amino-acid chain; its full sequence is RNA polymerase II elongation factor ELL3 (397 aa).

Disordered regions lie at residues 164-219 and 237-284; these read VSDP…KRSV and VPSP…PEDI. Positions 168-178 are enriched in polar residues; sequence LASNQGQSLPG. A compositionally biased stretch (acidic residues) spans 250–262; that stretch reads QEGEDWEQEDEDM. Positions 269–281 are enriched in low complexity; the sequence is SSSVQEDSESPSP. Positions 285-395 constitute an OCEL domain; it reads PDYLLQYRAI…LILEFEEKNR (111 aa).

The protein belongs to the ELL/occludin family. Interacts with AFF4. Component of the super elongation complex (SEC), at least composed of EAF1, EAF2, CDK9, MLLT3/AF9, AFF (AFF1 or AFF4), the P-TEFb complex and ELL (ELL, ELL2 or ELL3). Component of the little elongation complex (LEC), at least composed of ELL (ELL, ELL2 or ELL3), ZC3H8, ICE1 and ICE2. As to expression, testis specific.

Its subcellular location is the nucleus. Functionally, enhancer-binding elongation factor that specifically binds enhancers in embryonic stem cells (ES cells), marks them, and is required for their future activation during stem cell specification. Does not only bind to enhancer regions of active genes, but also marks the enhancers that are in a poised or inactive state in ES cells and is required for establishing proper RNA polymerase II occupancy at developmentally regulated genes in a cohesin-dependent manner. Probably required for priming developmentally regulated genes for later recruitment of the super elongation complex (SEC), for transcriptional activation during differentiation. Required for recruitment of P-TEFb within SEC during differentiation. Probably preloaded on germ cell chromatin, suggesting that it may prime gene activation by marking enhancers as early as in the germ cells. Promoting epithelial-mesenchymal transition (EMT). Elongation factor component of the super elongation complex (SEC), a complex required to increase the catalytic rate of RNA polymerase II transcription by suppressing transient pausing by the polymerase at multiple sites along the DNA. Component of the little elongation complex (LEC), a complex required to regulate small nuclear RNA (snRNA) gene transcription by RNA polymerase II and III. The chain is RNA polymerase II elongation factor ELL3 (ELL3) from Homo sapiens (Human).